The following is a 668-amino-acid chain: ATP-dependent RNA helicase MSS116, mitochondrial (668 aa).

Residues 1–38 (MLKQLSRSLGIRSSPIVANLIRSKQVCTRGFHISLVKQ) constitute a mitochondrion transit peptide. The Q motif signature appears at 87 to 115 (DFKGKGYIHDSIINSLHKNDFKELTPIQQ). Positions 119–300 (VPIFNTEKGL…KKHIHPEYEF (182 aa)) constitute a Helicase ATP-binding domain. ATP is bound at residue 132–139 (AKTGTGKT). The short motif at 242–245 (DEAD) is the DEAD box element. A Helicase C-terminal domain is found at 332–501 (SLSELHGIMK…NIIDQIESPL (170 aa)). The tract at residues 585-668 (YSDFSRSGMS…EHRRIRDHDE (84 aa)) is disordered. Residues 586-597 (SDFSRSGMSQRP) show a composition bias toward polar residues. A compositionally biased stretch (low complexity) spans 609–636 (NGRGKYGNNRNNDWSYQNKNRYNNNNNR). Residues 637 to 668 (QTERSYDSDRKSHNDWKYEKKFEHRRIRDHDE) are compositionally biased toward basic and acidic residues.

This sequence belongs to the DEAD box helicase family. DDX18/HAS1 subfamily.

It is found in the mitochondrion matrix. The catalysed reaction is ATP + H2O = ADP + phosphate + H(+). Its function is as follows. ATP-dependent RNA helicase required for mitochondrial splicing of group I and II introns. Also required for efficient mitochondrial translation. This chain is ATP-dependent RNA helicase MSS116, mitochondrial (MSS116), found in Candida albicans (strain SC5314 / ATCC MYA-2876) (Yeast).